The primary structure comprises 185 residues: Ribosome-recycling factor (185 aa).

The protein belongs to the RRF family.

Its subcellular location is the cytoplasm. In terms of biological role, responsible for the release of ribosomes from messenger RNA at the termination of protein biosynthesis. May increase the efficiency of translation by recycling ribosomes from one round of translation to another. The chain is Ribosome-recycling factor from Vibrio cholerae serotype O1 (strain ATCC 39541 / Classical Ogawa 395 / O395).